A 398-amino-acid polypeptide reads, in one-letter code: NADH-quinone oxidoreductase subunit D (398 aa).

This sequence belongs to the complex I 49 kDa subunit family. NDH-1 is composed of 14 different subunits. Subunits NuoB, C, D, E, F, and G constitute the peripheral sector of the complex.

The protein localises to the cell inner membrane. It carries out the reaction a quinone + NADH + 5 H(+)(in) = a quinol + NAD(+) + 4 H(+)(out). In terms of biological role, NDH-1 shuttles electrons from NADH, via FMN and iron-sulfur (Fe-S) centers, to quinones in the respiratory chain. The immediate electron acceptor for the enzyme in this species is believed to be ubiquinone. Couples the redox reaction to proton translocation (for every two electrons transferred, four hydrogen ions are translocated across the cytoplasmic membrane), and thus conserves the redox energy in a proton gradient. This chain is NADH-quinone oxidoreductase subunit D, found in Caulobacter vibrioides (strain ATCC 19089 / CIP 103742 / CB 15) (Caulobacter crescentus).